The chain runs to 447 residues: Protein cortex (447 aa).

6 WD repeats span residues 108 to 148 (TYSY…IGHG), 149 to 188 (FAEYEIQCCKFDPRGELLALGTYMKTLEIHNNSKSKKIMS), 198 to 237 (NMNCSITAVDWSPTGNSFAAGCSGGAVTSFTRAAKLISWR), 281 to 325 (DSDW…VRDT), 344 to 380 (GELVLSMWHSDRATLHPKTCSQLVVLSDPDTMVDQWG), and 384 to 423 (SGLDRVRTMIFSPDGTKLATATTDEDLIIWNFLPEDNKMK). The D-box motif lies at 384–395 (SGLDRVRTMIFS).

Belongs to the WD repeat CORT family.

The protein localises to the cytoplasm. Functionally, controls wing pigmentation patterning by regulating scale cell development, thereby playing a key role in mimicry and crypsis. Probably acts as an activator of the anaphase promoting complex/cyclosome (APC/C) that promotes the ubiquitin ligase activity and substrate specificity of the APC/C. The protein is Protein cortex of Heliconius melpomene (Postman butterfly).